The sequence spans 422 residues: Serine--tRNA ligase (422 aa).

An L-serine-binding site is contributed by 226–228 (TSE). ATP contacts are provided by residues 257 to 259 (RRE) and valine 273. Glutamate 280 is a binding site for L-serine. 344-347 (ELTS) serves as a coordination point for ATP. L-serine is bound at residue threonine 379.

It belongs to the class-II aminoacyl-tRNA synthetase family. Type-1 seryl-tRNA synthetase subfamily. Homodimer. The tRNA molecule binds across the dimer.

It is found in the cytoplasm. It catalyses the reaction tRNA(Ser) + L-serine + ATP = L-seryl-tRNA(Ser) + AMP + diphosphate + H(+). The enzyme catalyses tRNA(Sec) + L-serine + ATP = L-seryl-tRNA(Sec) + AMP + diphosphate + H(+). The protein operates within aminoacyl-tRNA biosynthesis; selenocysteinyl-tRNA(Sec) biosynthesis; L-seryl-tRNA(Sec) from L-serine and tRNA(Sec): step 1/1. Functionally, catalyzes the attachment of serine to tRNA(Ser). Is also able to aminoacylate tRNA(Sec) with serine, to form the misacylated tRNA L-seryl-tRNA(Sec), which will be further converted into selenocysteinyl-tRNA(Sec). This Corynebacterium glutamicum (strain ATCC 13032 / DSM 20300 / JCM 1318 / BCRC 11384 / CCUG 27702 / LMG 3730 / NBRC 12168 / NCIMB 10025 / NRRL B-2784 / 534) protein is Serine--tRNA ligase.